A 301-amino-acid polypeptide reads, in one-letter code: Homoserine O-acetyltransferase (301 aa).

The Acyl-thioester intermediate role is filled by Cys142. The substrate site is built by Lys163 and Ser192. Residue His235 is the Proton acceptor of the active site. Residue Glu237 is part of the active site. Residue Arg249 coordinates substrate.

Belongs to the MetA family.

It localises to the cytoplasm. The catalysed reaction is L-homoserine + acetyl-CoA = O-acetyl-L-homoserine + CoA. It participates in amino-acid biosynthesis; L-methionine biosynthesis via de novo pathway; O-acetyl-L-homoserine from L-homoserine: step 1/1. In terms of biological role, transfers an acetyl group from acetyl-CoA to L-homoserine, forming acetyl-L-homoserine. The protein is Homoserine O-acetyltransferase of Bacillus thuringiensis subsp. konkukian (strain 97-27).